A 122-amino-acid chain; its full sequence is Large ribosomal subunit protein uL14c (122 aa).

Belongs to the universal ribosomal protein uL14 family. In terms of assembly, part of the 50S ribosomal subunit.

The protein resides in the plastid. It localises to the chloroplast. Its function is as follows. Binds to 23S rRNA. This is Large ribosomal subunit protein uL14c from Manihot esculenta (Cassava).